The following is a 234-amino-acid chain: 2-hydroxy-3-keto-5-methylthiopentenyl-1-phosphate phosphatase (234 aa).

It belongs to the HAD-like hydrolase superfamily. MtnX family.

The catalysed reaction is 2-hydroxy-5-methylsulfanyl-3-oxopent-1-enyl phosphate + H2O = 1,2-dihydroxy-5-(methylsulfanyl)pent-1-en-3-one + phosphate. It participates in amino-acid biosynthesis; L-methionine biosynthesis via salvage pathway; L-methionine from S-methyl-5-thio-alpha-D-ribose 1-phosphate: step 4/6. Its function is as follows. Dephosphorylates 2-hydroxy-3-keto-5-methylthiopentenyl-1-phosphate (HK-MTPenyl-1-P) yielding 1,2-dihydroxy-3-keto-5-methylthiopentene (DHK-MTPene). This Bacillus velezensis (strain DSM 23117 / BGSC 10A6 / LMG 26770 / FZB42) (Bacillus amyloliquefaciens subsp. plantarum) protein is 2-hydroxy-3-keto-5-methylthiopentenyl-1-phosphate phosphatase.